The sequence spans 461 residues: GTPase Der (461 aa).

2 EngA-type G domains span residues 25-188 (PVVA…PNVA) and 198-371 (RRVA…ASWD). GTP contacts are provided by residues 31–38 (GRPNVGKS), 78–82 (DTGGW), 140–143 (NKVD), 204–211 (GKPNVGKS), 251–255 (DTAGL), and 316–319 (NKWD). The KH-like domain occupies 372-454 (TRIATGPLNI…PIRINVRVRE (83 aa)).

This sequence belongs to the TRAFAC class TrmE-Era-EngA-EngB-Septin-like GTPase superfamily. EngA (Der) GTPase family. In terms of assembly, associates with the 50S ribosomal subunit.

GTPase that plays an essential role in the late steps of ribosome biogenesis. The sequence is that of GTPase Der from Mycobacterium leprae (strain TN).